Here is a 275-residue protein sequence, read N- to C-terminus: Sulfur carrier protein FdhD (275 aa).

C121 (cysteine persulfide intermediate) is an active-site residue. 258 to 263 (FSKPGR) provides a ligand contact to Mo-bis(molybdopterin guanine dinucleotide).

It belongs to the FdhD family.

It localises to the cytoplasm. Its function is as follows. Required for formate dehydrogenase (FDH) activity. Acts as a sulfur carrier protein that transfers sulfur from IscS to the molybdenum cofactor prior to its insertion into FDH. This chain is Sulfur carrier protein FdhD, found in Yersinia enterocolitica serotype O:8 / biotype 1B (strain NCTC 13174 / 8081).